Reading from the N-terminus, the 453-residue chain is Elongation factor 1-alpha (453 aa).

In terms of domain architecture, tr-type G spans 5–230; the sequence is KTHINIVVIG…DAIVEPKRPH (226 aa). A G1 region spans residues 14-21; the sequence is GHVDAGKS. 14–21 provides a ligand contact to GTP; the sequence is GHVDAGKS. The interval 70–74 is G2; sequence GITID. The interval 91–94 is G3; that stretch reads DAPG. Residues 91-95 and 153-156 contribute to the GTP site; these read DAPGH and NKMD. Residues 153-156 form a G4 region; it reads NKMD. Positions 194 to 196 are G5; sequence SGW.

Belongs to the TRAFAC class translation factor GTPase superfamily. Classic translation factor GTPase family. EF-Tu/EF-1A subfamily. In terms of assembly, binds to actin.

The protein localises to the cytoplasm. Its function is as follows. This protein promotes the GTP-dependent binding of aminoacyl-tRNA to the A-site of ribosomes during protein biosynthesis. It is also an abundant actin filament bundling protein. This chain is Elongation factor 1-alpha (eef1a2), found in Dictyostelium discoideum (Social amoeba).